The following is a 328-amino-acid chain: L-serine dehydratase/L-threonine deaminase (328 aa).

An N6-(pyridoxal phosphate)lysine modification is found at Lys-41. Pyridoxal 5'-phosphate is bound at residue Pro-128.

This sequence belongs to the serine/threonine dehydratase family. Homodimer. It depends on pyridoxal 5'-phosphate as a cofactor. In terms of tissue distribution, predominantly expressed in the perivenous regions of the liver.

The protein resides in the cytoplasm. It carries out the reaction L-serine = pyruvate + NH4(+). The catalysed reaction is L-threonine = 2-oxobutanoate + NH4(+). It functions in the pathway carbohydrate biosynthesis; gluconeogenesis. Its function is as follows. Catalyzes the pyridoxal-phosphate-dependent dehydrative deamination of L-threonine and L-serine to ammonia and alpha-ketobutyrate and pyruvate, respectively. The sequence is that of L-serine dehydratase/L-threonine deaminase (SDS) from Homo sapiens (Human).